The chain runs to 541 residues: Protein yellow (541 aa).

The signal sequence occupies residues 1 to 21 (MFQDKGWVLLTLITLVSPSWA). Asn144 carries N-linked (GlcNAc...) asparagine glycosylation.

This sequence belongs to the major royal jelly protein family.

The protein resides in the secreted. Controls the pigmentation pattern of the adult cuticle and larval mouth parts. The polypeptide is Protein yellow (y) (Drosophila yakuba (Fruit fly)).